The primary structure comprises 986 residues: Bifunctional glutamine synthetase adenylyltransferase/adenylyl-removing enzyme (986 aa).

Positions 1 to 475 (MSFPLAHVDA…VFDHLIGEEK (475 aa)) are adenylyl removase. Positions 481-986 (TETLWHDFLE…LFEHNDKYEE (506 aa)) are adenylyl transferase.

It belongs to the GlnE family. It depends on Mg(2+) as a cofactor.

It catalyses the reaction [glutamine synthetase]-O(4)-(5'-adenylyl)-L-tyrosine + phosphate = [glutamine synthetase]-L-tyrosine + ADP. The catalysed reaction is [glutamine synthetase]-L-tyrosine + ATP = [glutamine synthetase]-O(4)-(5'-adenylyl)-L-tyrosine + diphosphate. Its function is as follows. Involved in the regulation of glutamine synthetase GlnA, a key enzyme in the process to assimilate ammonia. When cellular nitrogen levels are high, the C-terminal adenylyl transferase (AT) inactivates GlnA by covalent transfer of an adenylyl group from ATP to specific tyrosine residue of GlnA, thus reducing its activity. Conversely, when nitrogen levels are low, the N-terminal adenylyl removase (AR) activates GlnA by removing the adenylyl group by phosphorolysis, increasing its activity. The regulatory region of GlnE binds the signal transduction protein PII (GlnB) which indicates the nitrogen status of the cell. In Pasteurella multocida (strain Pm70), this protein is Bifunctional glutamine synthetase adenylyltransferase/adenylyl-removing enzyme.